The chain runs to 148 residues: Snaclec B3/B5 (148 aa).

Residues 1–24 form the signal peptide; the sequence is MGRFIFVSFGLLVVFLSLSGTGAA. Disulfide bonds link C27-C38, C55-C144, and C121-C136. In terms of domain architecture, C-type lectin spans 34–145; sequence YDQHCYKVFD…CRLLGHFVCK (112 aa).

Belongs to the snaclec family. As to quaternary structure, heterodimer; disulfide-linked. Expressed by the venom gland.

The protein resides in the secreted. Interferes with one step of hemostasis (modulation of platelet aggregation, or coagulation cascade, for example). This Macrovipera lebetinus (Levantine viper) protein is Snaclec B3/B5.